A 311-amino-acid chain; its full sequence is DNA-directed RNA polymerase subunit alpha (311 aa).

The interval 1-226 (MIEFEKPNIT…EHLDLFTNLT (226 aa)) is alpha N-terminal domain (alpha-NTD). The alpha C-terminal domain (alpha-CTD) stretch occupies residues 243–311 (DDRILDRTIE…IDLGLGLKDK (69 aa)).

It belongs to the RNA polymerase alpha chain family. Homodimer. The RNAP catalytic core consists of 2 alpha, 1 beta, 1 beta' and 1 omega subunit. When a sigma factor is associated with the core the holoenzyme is formed, which can initiate transcription.

It carries out the reaction RNA(n) + a ribonucleoside 5'-triphosphate = RNA(n+1) + diphosphate. In terms of biological role, DNA-dependent RNA polymerase catalyzes the transcription of DNA into RNA using the four ribonucleoside triphosphates as substrates. The chain is DNA-directed RNA polymerase subunit alpha from Streptococcus pneumoniae serotype 4 (strain ATCC BAA-334 / TIGR4).